The following is a 253-amino-acid chain: Ubiquinone/menaquinone biosynthesis C-methyltransferase UbiE (253 aa).

Residues T76, D97, and N125–A126 each bind S-adenosyl-L-methionine.

It belongs to the class I-like SAM-binding methyltransferase superfamily. MenG/UbiE family.

The enzyme catalyses a 2-demethylmenaquinol + S-adenosyl-L-methionine = a menaquinol + S-adenosyl-L-homocysteine + H(+). It catalyses the reaction a 2-methoxy-6-(all-trans-polyprenyl)benzene-1,4-diol + S-adenosyl-L-methionine = a 5-methoxy-2-methyl-3-(all-trans-polyprenyl)benzene-1,4-diol + S-adenosyl-L-homocysteine + H(+). It participates in quinol/quinone metabolism; menaquinone biosynthesis; menaquinol from 1,4-dihydroxy-2-naphthoate: step 2/2. Its pathway is cofactor biosynthesis; ubiquinone biosynthesis. Its function is as follows. Methyltransferase required for the conversion of demethylmenaquinol (DMKH2) to menaquinol (MKH2) and the conversion of 2-polyprenyl-6-methoxy-1,4-benzoquinol (DDMQH2) to 2-polyprenyl-3-methyl-6-methoxy-1,4-benzoquinol (DMQH2). The chain is Ubiquinone/menaquinone biosynthesis C-methyltransferase UbiE from Bradyrhizobium diazoefficiens (strain JCM 10833 / BCRC 13528 / IAM 13628 / NBRC 14792 / USDA 110).